The sequence spans 333 residues: Lipoyl synthase (333 aa).

The disordered stretch occupies residues 1-29 (MTDSAAGATEVATPATPSNKPYDATAKQK). [4Fe-4S] cluster contacts are provided by cysteine 80, cysteine 85, cysteine 91, cysteine 106, cysteine 110, cysteine 113, and serine 320. Residues 91-309 (CFGKGTATFM…EEKAYEMGFT (219 aa)) enclose the Radical SAM core domain.

The protein belongs to the radical SAM superfamily. Lipoyl synthase family. It depends on [4Fe-4S] cluster as a cofactor.

The protein resides in the cytoplasm. It carries out the reaction [[Fe-S] cluster scaffold protein carrying a second [4Fe-4S](2+) cluster] + N(6)-octanoyl-L-lysyl-[protein] + 2 oxidized [2Fe-2S]-[ferredoxin] + 2 S-adenosyl-L-methionine + 4 H(+) = [[Fe-S] cluster scaffold protein] + N(6)-[(R)-dihydrolipoyl]-L-lysyl-[protein] + 4 Fe(3+) + 2 hydrogen sulfide + 2 5'-deoxyadenosine + 2 L-methionine + 2 reduced [2Fe-2S]-[ferredoxin]. Its pathway is protein modification; protein lipoylation via endogenous pathway; protein N(6)-(lipoyl)lysine from octanoyl-[acyl-carrier-protein]: step 2/2. In terms of biological role, catalyzes the radical-mediated insertion of two sulfur atoms into the C-6 and C-8 positions of the octanoyl moiety bound to the lipoyl domains of lipoate-dependent enzymes, thereby converting the octanoylated domains into lipoylated derivatives. This is Lipoyl synthase from Ralstonia pickettii (strain 12J).